The primary structure comprises 126 residues: Ribosome-binding factor A (126 aa).

The protein belongs to the RbfA family. Monomer. Binds 30S ribosomal subunits, but not 50S ribosomal subunits or 70S ribosomes.

Its subcellular location is the cytoplasm. One of several proteins that assist in the late maturation steps of the functional core of the 30S ribosomal subunit. Associates with free 30S ribosomal subunits (but not with 30S subunits that are part of 70S ribosomes or polysomes). Required for efficient processing of 16S rRNA. May interact with the 5'-terminal helix region of 16S rRNA. The protein is Ribosome-binding factor A of Azoarcus sp. (strain BH72).